Reading from the N-terminus, the 88-residue chain is UPF0250 protein Sbal_3280 (88 aa).

This sequence belongs to the UPF0250 family.

The sequence is that of UPF0250 protein Sbal_3280 from Shewanella baltica (strain OS155 / ATCC BAA-1091).